The following is a 398-amino-acid chain: Serine/threonine-protein kinase 32A (398 aa).

Gly-2 is lipidated: N-myristoyl glycine. The region spanning 23-281 (FEILRAIGKG…LTDIQNFPYM (259 aa)) is the Protein kinase domain. Residues 29-37 (IGKGSFGKV) and Lys-52 each bind ATP. Catalysis depends on Asp-146, which acts as the Proton acceptor. The segment at 379-398 (ALEQTKNNTEEEEDGQNNNL) is disordered. Acidic residues predominate over residues 388 to 398 (EEEEDGQNNNL).

It belongs to the protein kinase superfamily. Ser/Thr protein kinase family. Mg(2+) serves as cofactor.

It is found in the cell membrane. The catalysed reaction is L-seryl-[protein] + ATP = O-phospho-L-seryl-[protein] + ADP + H(+). It catalyses the reaction L-threonyl-[protein] + ATP = O-phospho-L-threonyl-[protein] + ADP + H(+). The protein is Serine/threonine-protein kinase 32A of Mus musculus (Mouse).